Reading from the N-terminus, the 309-residue chain is Ribonuclease Z (309 aa).

Residues His-63, His-65, Asp-67, His-68, His-145, Asp-216, and His-274 each coordinate Zn(2+). Asp-67 (proton acceptor) is an active-site residue.

It belongs to the RNase Z family. Homodimer. Requires Zn(2+) as cofactor.

It catalyses the reaction Endonucleolytic cleavage of RNA, removing extra 3' nucleotides from tRNA precursor, generating 3' termini of tRNAs. A 3'-hydroxy group is left at the tRNA terminus and a 5'-phosphoryl group is left at the trailer molecule.. Its function is as follows. Zinc phosphodiesterase, which displays some tRNA 3'-processing endonuclease activity. Probably involved in tRNA maturation, by removing a 3'-trailer from precursor tRNA. This chain is Ribonuclease Z, found in Streptococcus gordonii (strain Challis / ATCC 35105 / BCRC 15272 / CH1 / DL1 / V288).